The chain runs to 451 residues: tRNA-2-methylthio-N(6)-dimethylallyladenosine synthase (451 aa).

One can recognise an MTTase N-terminal domain in the interval 6 to 122 (RHYHITTFGC…LQDLLEQVFN (117 aa)). Cys15, Cys51, Cys85, Cys157, Cys161, and Cys164 together coordinate [4Fe-4S] cluster. The Radical SAM core domain occupies 143 to 380 (RDSKITAWVN…NHLVGVKAAD (238 aa)). A TRAM domain is found at 383 to 447 (QRYMGRIEEV…PFSLTGEVKE (65 aa)).

Belongs to the methylthiotransferase family. MiaB subfamily. As to quaternary structure, monomer. It depends on [4Fe-4S] cluster as a cofactor.

It is found in the cytoplasm. The catalysed reaction is N(6)-dimethylallyladenosine(37) in tRNA + (sulfur carrier)-SH + AH2 + 2 S-adenosyl-L-methionine = 2-methylsulfanyl-N(6)-dimethylallyladenosine(37) in tRNA + (sulfur carrier)-H + 5'-deoxyadenosine + L-methionine + A + S-adenosyl-L-homocysteine + 2 H(+). In terms of biological role, catalyzes the methylthiolation of N6-(dimethylallyl)adenosine (i(6)A), leading to the formation of 2-methylthio-N6-(dimethylallyl)adenosine (ms(2)i(6)A) at position 37 in tRNAs that read codons beginning with uridine. The sequence is that of tRNA-2-methylthio-N(6)-dimethylallyladenosine synthase from Trichodesmium erythraeum (strain IMS101).